The primary structure comprises 983 residues: Bifunctional glutamine synthetase adenylyltransferase/adenylyl-removing enzyme (983 aa).

The tract at residues 1–490 (MDRKSSVTID…AHGQVFYSPV (490 aa)) is adenylyl removase. The tract at residues 496 to 983 (RIPTQDLRMS…RVVDAVFWNQ (488 aa)) is adenylyl transferase.

It belongs to the GlnE family. It depends on Mg(2+) as a cofactor.

The enzyme catalyses [glutamine synthetase]-O(4)-(5'-adenylyl)-L-tyrosine + phosphate = [glutamine synthetase]-L-tyrosine + ADP. It catalyses the reaction [glutamine synthetase]-L-tyrosine + ATP = [glutamine synthetase]-O(4)-(5'-adenylyl)-L-tyrosine + diphosphate. Its function is as follows. Involved in the regulation of glutamine synthetase GlnA, a key enzyme in the process to assimilate ammonia. When cellular nitrogen levels are high, the C-terminal adenylyl transferase (AT) inactivates GlnA by covalent transfer of an adenylyl group from ATP to specific tyrosine residue of GlnA, thus reducing its activity. Conversely, when nitrogen levels are low, the N-terminal adenylyl removase (AR) activates GlnA by removing the adenylyl group by phosphorolysis, increasing its activity. The regulatory region of GlnE binds the signal transduction protein PII (GlnB) which indicates the nitrogen status of the cell. This chain is Bifunctional glutamine synthetase adenylyltransferase/adenylyl-removing enzyme, found in Cutibacterium acnes (strain DSM 16379 / KPA171202) (Propionibacterium acnes).